Here is a 267-residue protein sequence, read N- to C-terminus: Tryptophan synthase alpha chain (267 aa).

Catalysis depends on proton acceptor residues glutamate 43 and aspartate 54.

It belongs to the TrpA family. In terms of assembly, tetramer of two alpha and two beta chains.

The enzyme catalyses (1S,2R)-1-C-(indol-3-yl)glycerol 3-phosphate + L-serine = D-glyceraldehyde 3-phosphate + L-tryptophan + H2O. It participates in amino-acid biosynthesis; L-tryptophan biosynthesis; L-tryptophan from chorismate: step 5/5. Its function is as follows. The alpha subunit is responsible for the aldol cleavage of indoleglycerol phosphate to indole and glyceraldehyde 3-phosphate. The sequence is that of Tryptophan synthase alpha chain from Bacillus pumilus (strain SAFR-032).